We begin with the raw amino-acid sequence, 174 residues long: Large ribosomal subunit protein uL15 (174 aa).

2 disordered regions span residues methionine 1–arginine 56 and valine 150–alanine 174. A compositionally biased stretch (gly residues) spans arginine 21–methionine 35.

It belongs to the universal ribosomal protein uL15 family. Part of the 50S ribosomal subunit.

Its function is as follows. Binds to the 23S rRNA. The protein is Large ribosomal subunit protein uL15 of Roseiflexus castenholzii (strain DSM 13941 / HLO8).